The following is a 156-amino-acid chain: 3-hydroxyacyl-[acyl-carrier-protein] dehydratase FabZ (156 aa).

Histidine 62 is a catalytic residue.

It belongs to the thioester dehydratase family. FabZ subfamily.

The protein resides in the cytoplasm. It carries out the reaction a (3R)-hydroxyacyl-[ACP] = a (2E)-enoyl-[ACP] + H2O. In terms of biological role, involved in unsaturated fatty acids biosynthesis. Catalyzes the dehydration of short chain beta-hydroxyacyl-ACPs and long chain saturated and unsaturated beta-hydroxyacyl-ACPs. In Parasynechococcus marenigrum (strain WH8102), this protein is 3-hydroxyacyl-[acyl-carrier-protein] dehydratase FabZ.